A 143-amino-acid polypeptide reads, in one-letter code: Large-conductance mechanosensitive channel (143 aa).

2 consecutive transmembrane segments (helical) span residues 10–30 and 89–109; these read FAVK…GAFS and GSFI…FLMV.

It belongs to the MscL family. In terms of assembly, homopentamer.

It localises to the cell inner membrane. Its function is as follows. Channel that opens in response to stretch forces in the membrane lipid bilayer. May participate in the regulation of osmotic pressure changes within the cell. This chain is Large-conductance mechanosensitive channel, found in Burkholderia ambifaria (strain ATCC BAA-244 / DSM 16087 / CCUG 44356 / LMG 19182 / AMMD) (Burkholderia cepacia (strain AMMD)).